The following is a 310-amino-acid chain: UPF0761 membrane protein VSAL_I2938 (310 aa).

The next 6 membrane-spanning stretches (helical) occupy residues 34–54 (YMAYITLLSLVPLVTVLLSVL), 97–117 (MTAVGSGFLFVASVMLISAID), 136–156 (FSLYWMILTLGPLLVWASLAA), 178–198 (LLGWLPIILSFSAFLGLYLLV), 207–227 (HALVGAMSAGCLFEVSKVGFA), and 242–262 (ALAAVPILFVWIYLCWIIVLI).

It belongs to the UPF0761 family.

The protein localises to the cell inner membrane. The protein is UPF0761 membrane protein VSAL_I2938 of Aliivibrio salmonicida (strain LFI1238) (Vibrio salmonicida (strain LFI1238)).